Consider the following 690-residue polypeptide: Crooked neck-like protein 1 (690 aa).

16 HAT repeats span residues 61–93 (DYKL…WEES), 95–127 (KEIQ…MEMK), 129–161 (RQVN…MEEM), 163–194 (GNVA…FELR), 196–227 (KEVE…FEEK), 229–264 (AYFA…FEEN), 266–300 (KEFE…FEKK), 310–342 (IIVS…LVES), 344–378 (AEAD…LWVN), 388–424 (KDPE…FEIR), 459–491 (REFD…LETI), 493–527 (GDIE…FEIE), 529–560 (EETE…FELS), 565–606 (GSVA…EFGT), 608–646 (SDKE…YIFP), and 648–673 (DAAN…EREA). Residues 250–467 (MDEHLYVAFA…LREFDRCRKL (218 aa)) form a mediates interaction with HSP90 region. At S342 the chain carries Phosphoserine. A Nuclear localization signal motif is present at residues 618–626 (PEKVKKRRK). The segment covering 667–679 (QQQEREAAEQDPD) has biased composition (basic and acidic residues). Residues 667–690 (QQQEREAAEQDPDKDIDESESSSF) are disordered. Residues 680–690 (KDIDESESSSF) show a composition bias toward acidic residues. S689 carries the phosphoserine modification.

Belongs to the crooked-neck family. Identified in the spliceosome C complex. Present in a spliceosome complex assembled in vitro containing CRNKL1, HPRP8BP and SNRPB2. Component of the minor spliceosome, which splices U12-type introns. Interacts with PPIL2 (via the PPIase cyclophilin-type domain); they may form a trimeric complex with HSP90.

The protein resides in the nucleus. The protein localises to the nucleus speckle. In terms of biological role, involved in pre-mRNA splicing process. As a component of the minor spliceosome, involved in the splicing of U12-type introns in pre-mRNAs. In Mus musculus (Mouse), this protein is Crooked neck-like protein 1 (Crnkl1).